A 418-amino-acid chain; its full sequence is Diacylglycerol O-acyltransferase 1 (418 aa).

Residues 1–30 (MSGTFNDIRRRKKEEGSPTAGITERHENKS) are disordered. Residues 1–71 (MSGTFNDIRR…LAVAWHTSSF (71 aa)) are Cytoplasmic-facing. Phosphoserine is present on Ser-17. A helical membrane pass occupies residues 72–92 (VLFSIFTLFAISTPALWVLAI). At 93 to 186 (PYMIYFFFDR…DYRNQECTGP (94 aa)) the chain is on the lumenal side. N-linked (GlcNAc...) asparagine glycosylation occurs at Asn-173. Residues 187 to 207 (TYLFGYHPHGIGALGAFGAFA) traverse the membrane as a helical segment. Residues 208-215 (TEGCNYSK) lie on the Cytoplasmic side of the membrane. A helical membrane pass occupies residues 216–236 (IFPGIPISLMTLVTQFHIPLY). Over 237 to 289 (RDYLLALGISSVSRKNALRTLSKNQSICIVVGGARESLLSSTNGTQLILNKRK) the chain is Lumenal. Asn-260 and Asn-279 each carry an N-linked (GlcNAc...) asparagine glycan. A helical transmembrane segment spans residues 290–310 (GFIKLAIQTGNINLVPVFAFG). The Cytoplasmic portion of the chain corresponds to 311-418 (EVDCYNVLST…VPDAELKIVG (108 aa)).

It belongs to the diacylglycerol acyltransferase family.

The protein resides in the lipid droplet. Its subcellular location is the endoplasmic reticulum membrane. It catalyses the reaction an acyl-CoA + a 1,2-diacyl-sn-glycerol = a triacyl-sn-glycerol + CoA. It carries out the reaction a 2-acylglycerol + an acyl-CoA = a 1,2-diacylglycerol + CoA. The enzyme catalyses 2-(9Z-octadecenoyl)-glycerol + (9Z)-octadecenoyl-CoA = 1,2-di-(9Z-octadecenoyl)-glycerol + CoA. It participates in glycerolipid metabolism; triacylglycerol biosynthesis. Functionally, catalyzes the terminal and only committed step in triacylglycerol (TAG) synthesis by using diacylglycerol (DAG) and fatty acyl-CoA as substrates. Required for storage lipid synthesis. Major DAG esterifying enzyme in stationary phase when TAG production is particularly active. Involved in lipid particle synthesis from the endoplasmic reticulum, promoting localized TAG production at discrete ER subdomains, and in ergosterol biosynthesis. Also has monoacylglycerol acyltransferase (MGAT) activity, catalyzing the acyl-CoA-dependent esterification of monoacylglycerol to diacylglycerol. Can also utilize ceramide instead of DAG, acylating the ceramides by attaching a fatty acid to the hydroxy group on the first carbon atom of the long-chain base to produce 1-O-acylceramides. In Saccharomyces cerevisiae (strain ATCC 204508 / S288c) (Baker's yeast), this protein is Diacylglycerol O-acyltransferase 1 (DGA1).